The chain runs to 318 residues: MRLTQAPATTAAAGNPPHKLGFAAKTKAYIALTKPRVMELLLVTTLPTMIFAARGLPNIWLILATMIGGAFAAGSAGAFNCYIDRDIDKIMHRTEDRPLVTGAVTPREALVFSWALGILSIAILWFGANPLAGLLGIAAIFFYVVVYTLILKRRTAQNIVWGGVAGCMPVLIAWAAVTNKVEWPAIILFMVIFLWTPPHYWPLSMRYSEDYKAANVPMLGAVAGARIVSVQVVLYTWAMVVCSLLLIPLGHACIVYTVVAGAAGLWFLLEAHRLHSKASHDTVTNKSAMKVFHGSISYLTLLFVALAVDPFVGMPLMG.

9 helical membrane passes run 37–57 (VMELLLVTTLPTMIFAARGLP), 59–79 (IWLILATMIGGAFAAGSAGAF), 108–128 (EALVFSWALGILSIAILWFGA), 131–151 (LAGLLGIAAIFFYVVVYTLIL), 158–178 (NIVWGGVAGCMPVLIAWAAVT), 183–203 (WPAIILFMVIFLWTPPHYWPL), 216–238 (VPMLGAVAGARIVSVQVVLYTWA), 249–269 (LGHACIVYTVVAGAAGLWFLL), and 296–316 (ISYLTLLFVALAVDPFVGMPL).

The protein belongs to the UbiA prenyltransferase family. Protoheme IX farnesyltransferase subfamily.

It is found in the cell membrane. The catalysed reaction is heme b + (2E,6E)-farnesyl diphosphate + H2O = Fe(II)-heme o + diphosphate. It functions in the pathway porphyrin-containing compound metabolism; heme O biosynthesis; heme O from protoheme: step 1/1. Converts heme B (protoheme IX) to heme O by substitution of the vinyl group on carbon 2 of heme B porphyrin ring with a hydroxyethyl farnesyl side group. The polypeptide is Protoheme IX farnesyltransferase (Renibacterium salmoninarum (strain ATCC 33209 / DSM 20767 / JCM 11484 / NBRC 15589 / NCIMB 2235)).